A 35-amino-acid chain; its full sequence is Thrombin-like enzyme cerastobin (35 aa).

The 35-residue stretch at 1–35 folds into the Peptidase S1 domain; it reads VIGGAKCNINEHRSIVLLYSSRLFGHTLINKEWVL.

This sequence belongs to the peptidase S1 family. Snake venom subfamily. In terms of assembly, monomer. In terms of tissue distribution, expressed by the venom gland.

It localises to the secreted. Inhibited by diisopropylfluorophosphate (DFP). Thrombin-like snake venom serine protease, that cleaves both alpha-chain (FGA) and beta-chain (FGB) of fibrinogen. Partially degrades factor X (F10), and release bradykinin from kininogen (KNG). Potently induces platelet aggregation. Shows a proteolytic activity towards protein constituents of the platelets cytoskeleton. Hydrolyzes actin, actin-binding protein, and P235. Shows a preferential cleavage at Arg-|-Xaa bonds. In Cerastes vipera (Sahara sand viper), this protein is Thrombin-like enzyme cerastobin.